Consider the following 1905-residue polypeptide: Transport and Golgi organization protein 1 homolog (1905 aa).

The signal sequence occupies residues 1–22 (MAAAQGLLFWLLLLGPPCRVPG). The Lumenal portion of the chain corresponds to 23-1141 (QPEQDPGRRF…EPASVTPLEN (1119 aa)). The SH3 domain occupies 45-107 (MLMYRGEALE…PKDLIQVVHE (63 aa)). Over residues 154-167 (SEKVKEKTAQRVEE) the composition is skewed to basic and acidic residues. Disordered stretches follow at residues 154 to 259 (SEKV…HEQE) and 313 to 621 (TVGK…IKDR). Residue Asn173 is glycosylated (N-linked (GlcNAc...) asparagine). Residues 173–190 (NESDAEPEPGEPNSEESE) show a composition bias toward acidic residues. The span at 198 to 208 (AELRERSEAQK) shows a compositional bias: basic and acidic residues. Residues 209-220 (SHPQVNSQTGHA) show a composition bias toward polar residues. A phosphoserine mark is found at Ser226 and Ser229. Basic and acidic residues predominate over residues 234 to 245 (LQDKLKVPDSEN). Asn246 is a glycosylation site (N-linked (GlcNAc...) asparagine). Residues 246-255 (NKTSNSSQVS) are compositionally biased toward polar residues. Residues 317–327 (EEEENKEDFDE) show a composition bias toward acidic residues. Basic and acidic residues-rich tracts occupy residues 337 to 366 (EDTK…KVEE) and 373 to 386 (KKGD…REDT). Acidic residues predominate over residues 392–414 (MEGEENTDTDLESSDSKEEDDPL). Composition is skewed to basic and acidic residues over residues 419–436 (RLGK…KAAD) and 459–480 (HMKD…HEVG). A coiled-coil region spans residues 467–527 (VEEPRRDWVQ…ANQENDLKGA (61 aa)). Residues 488-500 (DQAVQGSSQSGHL) are compositionally biased toward polar residues. Residues 531–542 (ISKEMLHEEKPS) show a composition bias toward basic and acidic residues. N-linked (GlcNAc...) asparagine glycosylation is present at Asn627. Disordered regions lie at residues 657 to 908 (QQGG…PHAP), 1036 to 1059 (APPA…QPPL), and 1085 to 1118 (PVTR…TPVD). Positions 669 to 714 (VSEKRELPEEEVTRVTKDASDEGQEVRKTGQTDSIEGRGFRPKEPN) are enriched in basic and acidic residues. Residues 715 to 730 (PEDEDYSPEELLEDEN) are compositionally biased toward acidic residues. Basic and acidic residues-rich tracts occupy residues 736–751 (QSKE…RLDV), 766–789 (TDPE…KNET), 842–859 (SQKK…EGHP), and 868–884 (PGVE…EKFV). At Ser873 the chain carries Phosphoserine. The stretch at 1142 to 1162 (AIAFIYSLVFHLTKTLLATLP) is an intramembrane region. The Lumenal portion of the chain corresponds to 1163–1173 (DDVQPGPDFYG). A helical transmembrane segment spans residues 1174–1194 (LPWKPVLITASLGIVSFAVFF). Over 1195 to 1905 (WRTVLAVKSR…DCSPALKQSP (711 aa)) the chain is Cytoplasmic. The mediates interaction with MIA2 stretch occupies residues 1208 to 1647 (VTEQQISEKL…VIVKPMPGRP (440 aa)). Residues 1211–1393 (QQISEKLKNI…SQKDLEVALT (183 aa)) are a coiled coil. A disordered region spans residues 1416–1443 (SESEDQNKGGSESDELANGEVGGDRSEK). The residue at position 1428 (Ser1428) is a Phosphoserine. A coiled-coil region spans residues 1484-1636 (NLEDQIKKLE…TQKMAMMQEE (153 aa)). The tract at residues 1639 to 1905 (IVKPMPGRPN…DCSPALKQSP (267 aa)) is disordered. Residues 1647–1664 (PNTQNPPRRGPLSQNGSF) are compositionally biased toward polar residues. Phosphoserine is present on residues Ser1663, Ser1675, Ser1703, Ser1724, Ser1738, and Ser1742. Positions 1748–1905 (DEGKVSMAAK…DCSPALKQSP (158 aa)) are proline-rich domain (PRD); mediates interaction with the COPII coat subunits SEC23A and SEC23B. A compositionally biased stretch (pro residues) spans 1776-1806 (LLPPIRYGPPPQLCGPFGPRPLPPPFGPGMR). Arg1781 is modified (asymmetric dimethylarginine). An SEC16A-interacting region (SIR); required for its localization to endoplasmic reticulum exit sites and for its interaction with SEC16A region spans residues 1785 to 1845 (PPQLCGPFGP…GHAPFRPLGS (61 aa)). Residues 1821 to 1831 (GKRDLPLDPRE) are compositionally biased toward basic and acidic residues. A phosphoserine mark is found at Ser1890 and Ser1904. Over residues 1891-1905 (QGASQDCSPALKQSP) the composition is skewed to polar residues.

This sequence belongs to the MIA/OTOR family. Tango1 subfamily. As to quaternary structure, interacts with MIA2. Interacts (via SH3 domain) with COL7A1. Interacts with the COPII coat subunits SEC23A, SEC23B and maybe SEC24C. May interact with APOB and MIA2. Interacts with SEC16A.

The protein localises to the endoplasmic reticulum membrane. Plays a role in the transport of cargos that are too large to fit into COPII-coated vesicles and require specific mechanisms to be incorporated into membrane-bound carriers and exported from the endoplasmic reticulum. This protein is required for collagen VII (COL7A1) secretion by loading COL7A1 into transport carriers. It may participate in cargo loading of COL7A1 at endoplasmic reticulum exit sites by binding to COPII coat subunits Sec23/24 and guiding SH3-bound COL7A1 into a growing carrier. Does not play a role in global protein secretion and is apparently specific to COL7A1 cargo loading. However, it may participate in secretion of other proteins in cells that do not secrete COL7A1. It is also specifically required for the secretion of lipoproteins by participating in their export from the endoplasmic reticulum. Required for correct assembly of COPII coat components at endoplasmic reticulum exit sites (ERES) and for the localization of SEC16A and membrane-bound ER-resident complexes consisting of MIA2 and PREB/SEC12 to ERES. In Bos taurus (Bovine), this protein is Transport and Golgi organization protein 1 homolog.